An 89-amino-acid chain; its full sequence is Peroxidase (89 aa).

His-52 contributes to the heme binding site. Ca(2+) contacts are provided by Thr-53 and Asp-68.

Requires heme b as cofactor. It depends on Ca(2+) as a cofactor.

The protein localises to the secreted. It catalyses the reaction 2 a phenolic donor + H2O2 = 2 a phenolic radical donor + 2 H2O. Removal of H(2)O(2), oxidation of toxic reductants, biosynthesis and degradation of lignin, suberization, auxin catabolism, response to environmental stresses such as wounding, pathogen attack and oxidative stress. These functions might be dependent on each isozyme/isoform in each plant tissue. Active against p-coumaryl alcohol, coniferyl alcohol and coniferyl aldehyde. This chain is Peroxidase, found in Ginkgo biloba (Ginkgo).